Reading from the N-terminus, the 810-residue chain is Lon protease (810 aa).

The region spanning 16–209 (YPVPPLRDIV…RVYAFMEGEI (194 aa)) is the Lon N-terminal domain. 361–368 (GPPGVGKT) serves as a coordination point for ATP. In terms of domain architecture, Lon proteolytic spans 598-779 (EDLVGVTTGL…DDVLKHALVR (182 aa)). Residues serine 685 and lysine 728 contribute to the active site.

This sequence belongs to the peptidase S16 family. As to quaternary structure, homohexamer. Organized in a ring with a central cavity.

The protein resides in the cytoplasm. It catalyses the reaction Hydrolysis of proteins in presence of ATP.. ATP-dependent serine protease that mediates the selective degradation of mutant and abnormal proteins as well as certain short-lived regulatory proteins. Required for cellular homeostasis and for survival from DNA damage and developmental changes induced by stress. Degrades polypeptides processively to yield small peptide fragments that are 5 to 10 amino acids long. Binds to DNA in a double-stranded, site-specific manner. Involved in iron uptake. The sequence is that of Lon protease from Azospirillum brasilense.